The sequence spans 384 residues: Putative aminohydrolase MTH_994 (384 aa).

Zn(2+) contacts are provided by H60, H62, H207, and D291.

The protein belongs to the metallo-dependent hydrolases superfamily. ATZ/TRZ family.

In Methanothermobacter thermautotrophicus (strain ATCC 29096 / DSM 1053 / JCM 10044 / NBRC 100330 / Delta H) (Methanobacterium thermoautotrophicum), this protein is Putative aminohydrolase MTH_994.